A 98-amino-acid polypeptide reads, in one-letter code: Small ribosomal subunit protein bTHXm (98 aa).

Residues 1–35 (MAAMQWCGAMTRRIMMTQRTSAALNCSARYSSLSP) constitute a mitochondrion transit peptide. Residues 52–71 (DKKTKKGKRFKGSYGNSRGK) form a disordered region. The segment covering 53–62 (KKTKKGKRFK) has biased composition (basic residues).

Belongs to the bacterial ribosomal protein bTHX family. Component of the mitochondrial ribosome small subunit.

The protein resides in the mitochondrion. This is Small ribosomal subunit protein bTHXm from Arabidopsis thaliana (Mouse-ear cress).